The following is a 350-amino-acid chain: Probable choline kinase 2 (350 aa).

ATP contacts are provided by Arg73, Gln210, and Asp227.

It belongs to the choline/ethanolamine kinase family.

The enzyme catalyses choline + ATP = phosphocholine + ADP + H(+). The protein operates within phospholipid metabolism; phosphatidylcholine biosynthesis; phosphocholine from choline: step 1/1. In terms of biological role, involved in phospholipid biosynthesis. Catalyzes the first step in phosphatidylcholine biosynthesis. The protein is Probable choline kinase 2 of Arabidopsis thaliana (Mouse-ear cress).